We begin with the raw amino-acid sequence, 314 residues long: Oxaloacetate tautomerase FAHD2A, mitochondrial (314 aa).

The N-terminal 84 residues, 1 to 84, are a transit peptide targeting the mitochondrion; the sequence is MLGSSGRRLL…ATLSVVRRAL (84 aa). Mg(2+) contacts are provided by Glu-159, Glu-161, and Asp-190.

This sequence belongs to the FAH family. Mg(2+) serves as cofactor. Requires Mn(2+) as cofactor.

Its subcellular location is the mitochondrion. The catalysed reaction is oxaloacetate = enol-oxaloacetate. Functionally, tautomerase that converts enol-oxaloacetate, a strong inhibitor of succinate dehydrogenase, to the physiological keto form of oxaloacetate. It is thereby required to maximize aerobic respiration efficiency by preventing succinate dehydrogenase inhibition. This chain is Oxaloacetate tautomerase FAHD2A, mitochondrial, found in Bos taurus (Bovine).